Consider the following 234-residue polypeptide: Proteasome subunit alpha type-2 (234 aa).

An N-acetylalanine modification is found at alanine 2. Position 121 is a phosphotyrosine (tyrosine 121).

Belongs to the peptidase T1A family. The 26S proteasome consists of a 20S proteasome core and two 19S regulatory subunits. The 20S proteasome core is a barrel-shaped complex made of 28 subunits that are arranged in four stacked rings. The two outer rings are each formed by seven alpha subunits, and the two inner rings are formed by seven beta subunits. The proteolytic activity is exerted by three beta-subunits PSMB5, PSMB6 and PSMB7.

The protein localises to the cytoplasm. It localises to the nucleus. Functionally, component of the 20S core proteasome complex involved in the proteolytic degradation of most intracellular proteins. This complex plays numerous essential roles within the cell by associating with different regulatory particles. Associated with two 19S regulatory particles, forms the 26S proteasome and thus participates in the ATP-dependent degradation of ubiquitinated proteins. The 26S proteasome plays a key role in the maintenance of protein homeostasis by removing misfolded or damaged proteins that could impair cellular functions, and by removing proteins whose functions are no longer required. Associated with the PA200 or PA28, the 20S proteasome mediates ubiquitin-independent protein degradation. This type of proteolysis is required in several pathways including spermatogenesis (20S-PA200 complex) or generation of a subset of MHC class I-presented antigenic peptides (20S-PA28 complex). The polypeptide is Proteasome subunit alpha type-2 (psma2) (Xenopus laevis (African clawed frog)).